A 389-amino-acid chain; its full sequence is F-box protein At3g19880 (389 aa).

The F-box domain maps to 2-49; the sequence is TMMSDLTQDLVEEILSRVPITSLGAVRSTCKGWNALSKERILCIGEPK.

The protein is F-box protein At3g19880 of Arabidopsis thaliana (Mouse-ear cress).